Reading from the N-terminus, the 666-residue chain is Probable potassium transport system protein Kup (666 aa).

12 helical membrane passes run 16–36 (GFII…LYTM), 58–78 (ISLI…LIAL), 98–118 (ISPW…SDGA), 141–161 (IYQN…VLFG), 165–185 (FGTG…FSFL), 221–241 (IFIL…YSDL), 253–273 (WPFV…WILA), 299–319 (LATL…FTLI), 343–363 (LYIP…VLAF), 373–393 (YGLA…YYLI), 399–419 (PILA…FFLA), and 424–444 (FMHG…VMFI).

It belongs to the HAK/KUP transporter (TC 2.A.72) family.

Its subcellular location is the cell membrane. It catalyses the reaction K(+)(in) + H(+)(in) = K(+)(out) + H(+)(out). Its function is as follows. Transport of potassium into the cell. Likely operates as a K(+):H(+) symporter. The chain is Probable potassium transport system protein Kup from Streptococcus pyogenes serotype M28 (strain MGAS6180).